A 644-amino-acid polypeptide reads, in one-letter code: Exoribonuclease 2 (644 aa).

Residues 189–516 (REDLTALNFV…NHRLLKAIIT (328 aa)) enclose the RNB domain. The S1 motif domain occupies 561 to 643 (DTRFTAEIID…ETRNVIARPV (83 aa)).

This sequence belongs to the RNR ribonuclease family. RNase II subfamily.

The protein localises to the cytoplasm. It carries out the reaction Exonucleolytic cleavage in the 3'- to 5'-direction to yield nucleoside 5'-phosphates.. In terms of biological role, involved in mRNA degradation. Hydrolyzes single-stranded polyribonucleotides processively in the 3' to 5' direction. This chain is Exoribonuclease 2, found in Yersinia pseudotuberculosis serotype O:3 (strain YPIII).